The following is an 82-amino-acid chain: Cysteine proteinase inhibitor A (82 aa).

The protein belongs to the cystatin family.

In terms of biological role, strong inhibitor of papain and ficin but poor inhibitor of cathepsin H, B and L. The polypeptide is Cysteine proteinase inhibitor A (Helianthus annuus (Common sunflower)).